Reading from the N-terminus, the 174-residue chain is Co-chaperone protein HscB homolog (174 aa).

The 73-residue stretch at Asn-2–Leu-74 folds into the J domain.

The protein belongs to the HscB family. Interacts with HscA and stimulates its ATPase activity.

Co-chaperone involved in the maturation of iron-sulfur cluster-containing proteins. Seems to help targeting proteins to be folded toward HscA. This Shewanella woodyi (strain ATCC 51908 / MS32) protein is Co-chaperone protein HscB homolog.